The sequence spans 1176 residues: Chromosome partition protein Smc (1176 aa).

P32–N39 contributes to the ATP binding site. The stretch at G169–Q506 forms a coiled coil. The region spanning L521 to A623 is the SMC hinge domain. 2 coiled-coil regions span residues D653–M947 and E987–T1024.

It belongs to the SMC family. In terms of assembly, homodimer.

It localises to the cytoplasm. In terms of biological role, required for chromosome condensation and partitioning. This is Chromosome partition protein Smc from Bordetella petrii (strain ATCC BAA-461 / DSM 12804 / CCUG 43448).